The chain runs to 293 residues: Aspartate carbamoyltransferase catalytic subunit (293 aa).

Residues arginine 50 and threonine 51 each contribute to the carbamoyl phosphate site. Lysine 78 contributes to the L-aspartate binding site. Arginine 100, histidine 127, and glutamine 130 together coordinate carbamoyl phosphate. 2 residues coordinate L-aspartate: arginine 160 and arginine 210. 2 residues coordinate carbamoyl phosphate: alanine 253 and proline 254.

Belongs to the aspartate/ornithine carbamoyltransferase superfamily. ATCase family. In terms of assembly, heterododecamer (2C3:3R2) of six catalytic PyrB chains organized as two trimers (C3), and six regulatory PyrI chains organized as three dimers (R2).

The catalysed reaction is carbamoyl phosphate + L-aspartate = N-carbamoyl-L-aspartate + phosphate + H(+). The protein operates within pyrimidine metabolism; UMP biosynthesis via de novo pathway; (S)-dihydroorotate from bicarbonate: step 2/3. In terms of biological role, catalyzes the condensation of carbamoyl phosphate and aspartate to form carbamoyl aspartate and inorganic phosphate, the committed step in the de novo pyrimidine nucleotide biosynthesis pathway. This chain is Aspartate carbamoyltransferase catalytic subunit, found in Staphylococcus epidermidis (strain ATCC 35984 / DSM 28319 / BCRC 17069 / CCUG 31568 / BM 3577 / RP62A).